A 322-amino-acid polypeptide reads, in one-letter code: Formimidoylglutamase (322 aa).

Residues His130, Asp156, His158, Asp160, Cys245, and Asp247 each coordinate Mn(2+).

Belongs to the arginase family. It depends on Mn(2+) as a cofactor.

The enzyme catalyses N-formimidoyl-L-glutamate + H2O = formamide + L-glutamate. It participates in amino-acid degradation; L-histidine degradation into L-glutamate; L-glutamate from N-formimidoyl-L-glutamate (hydrolase route): step 1/1. Its function is as follows. Catalyzes the conversion of N-formimidoyl-L-glutamate to L-glutamate and formamide. The chain is Formimidoylglutamase from Lysinibacillus sphaericus (strain C3-41).